The following is an 868-amino-acid chain: DNA mismatch repair protein MutS (868 aa).

623 to 630 (GPNMAGKS) lines the ATP pocket.

Belongs to the DNA mismatch repair MutS family.

Functionally, this protein is involved in the repair of mismatches in DNA. It is possible that it carries out the mismatch recognition step. This protein has a weak ATPase activity. The protein is DNA mismatch repair protein MutS of Magnetococcus marinus (strain ATCC BAA-1437 / JCM 17883 / MC-1).